Here is a 219-residue protein sequence, read N- to C-terminus: ATP-dependent Clp protease proteolytic subunit 3 (219 aa).

Catalysis depends on Ser112, which acts as the Nucleophile. The active site involves His137.

This sequence belongs to the peptidase S14 family. In terms of assembly, fourteen ClpP subunits assemble into 2 heptameric rings which stack back to back to give a disk-like structure with a central cavity, resembling the structure of eukaryotic proteasomes.

Its subcellular location is the cytoplasm. It catalyses the reaction Hydrolysis of proteins to small peptides in the presence of ATP and magnesium. alpha-casein is the usual test substrate. In the absence of ATP, only oligopeptides shorter than five residues are hydrolyzed (such as succinyl-Leu-Tyr-|-NHMec, and Leu-Tyr-Leu-|-Tyr-Trp, in which cleavage of the -Tyr-|-Leu- and -Tyr-|-Trp bonds also occurs).. Cleaves peptides in various proteins in a process that requires ATP hydrolysis. Has a chymotrypsin-like activity. Plays a major role in the degradation of misfolded proteins. This Streptomyces avermitilis (strain ATCC 31267 / DSM 46492 / JCM 5070 / NBRC 14893 / NCIMB 12804 / NRRL 8165 / MA-4680) protein is ATP-dependent Clp protease proteolytic subunit 3.